A 101-amino-acid chain; its full sequence is Small ribosomal subunit protein uS14 (101 aa).

The protein belongs to the universal ribosomal protein uS14 family. In terms of assembly, part of the 30S ribosomal subunit. Contacts proteins S3 and S10.

Its function is as follows. Binds 16S rRNA, required for the assembly of 30S particles and may also be responsible for determining the conformation of the 16S rRNA at the A site. This is Small ribosomal subunit protein uS14 from Pelagibacter ubique (strain HTCC1062).